Here is a 414-residue protein sequence, read N- to C-terminus: Tar DNA-binding protein homolog 1 (414 aa).

Basic and acidic residues-rich tracts occupy residues 1 to 44 (MADE…KTTD) and 153 to 167 (DDGRDGRSGRKRAVE). Disordered stretches follow at residues 1-58 (MADE…GDEP) and 132-167 (SSADATSAKRRKVGSSDDSDSDDGRDGRSGRKRAVE). RRM domains follow at residues 173-259 (VDLI…QGRP) and 262-341 (SRIF…IAQP). Residues 343 to 414 (EENNQSVGPD…APGDSRGPGW (72 aa)) form a disordered region. Over residues 361 to 373 (NRRERDRPDRRPI) the composition is skewed to basic and acidic residues.

Interacts with chromobox protein homolog hpl-2; interaction may maintain localization of hpl-2 to gene bodies. Widely expressed in a range of tissues including body wall muscles, pharynx and neurons of the midbody in adults and larvae.

The protein resides in the nucleus. It is found in the cytoplasm. Its function is as follows. RNA-binding protein which regulates transcription, splicing and RNA-editing. Limits the accumulation of double-stranded RNA by maintaining the abundance of the mature RNA transcripts that are formed from double-stranded precursor RNAs. Stress response protein that acts downstream of daf-16 in the insulin/IGF pathway to regulate longevity and the cellular stress response to osmotic, oxidative, proteotoxic and endoplasmic reticulum stress. Involved in the regulation of physiological processes including aging, fertility, growth and locomotion. Plays a role in maintaining localization of chromobox protein homolog hpl-2 to gene bodies, perhaps acting via binding to nascent RNA transcripts. This Caenorhabditis elegans protein is Tar DNA-binding protein homolog 1.